The sequence spans 1184 residues: Protocadherin-12 (1184 aa).

Residues 1-24 form the signal peptide; that stretch reads MMQLLQLLLGLLGPGGYLFLLGDC. Residues 25-718 lie on the Extracellular side of the membrane; it reads QEVTTLTVKY…PGALSMSMLT (694 aa). Cadherin domains follow at residues 28–135, 136–244, 245–352, 355–460, and 461–565; these read TTLT…QPRF, PKGE…SPAF, AESS…IPSI, TWAS…APVF, and EKSR…APEV. The N-linked (GlcNAc...) asparagine glycan is linked to Asn-415. N-linked (GlcNAc...) asparagine glycans are attached at residues Asn-582, Asn-659, and Asn-662. The 112-residue stretch at 600–711 folds into the Cadherin 6 domain; sequence PAGTDTPPLA…LRDSARKPGA (112 aa). The helical transmembrane segment at 719–739 threads the bilayer; it reads VICLAVLLGIFGLILALFMSI. Residues 740–1184 are Cytoplasmic-facing; sequence CRTEKKDNRA…RGSSSSSRCL (445 aa). 2 disordered regions span residues 854–928 and 973–1023; these read RQRN…ESGP and QFQP…DPEE. Residue Ser-859 is modified to Phosphoserine. Positions 1012-1023 are enriched in acidic residues; sequence PEQEEGPLDPEE. A Phosphoserine modification is found at Ser-1062. The tract at residues 1153–1184 is disordered; it reads SAASGMKVQGDPGGKTGTEGKSRGSSSSSRCL. The span at 1175-1184 shows a compositional bias: low complexity; that stretch reads RGSSSSSRCL.

Post-translationally, cleaved by ADAM10 close to the transmembrane domain to release the Protocadherin-12, secreted form in the serum. Cleavage results in reduced cellular adhesion in a cell migration assay. As to expression, expressed in highly vascularized tissues including the heart and placenta, but most tissues contain a low level of expression. Prominent expression in the spleen. Present in villous and extravillous trophoblast (at protein level).

It is found in the cell membrane. It localises to the cell junction. The protein localises to the secreted. In terms of biological role, cellular adhesion molecule that may play an important role in cell-cell interactions at interendothelial junctions. Acts as a regulator of cell migration, probably via increasing cell-cell adhesion. Promotes homotypic calcium-dependent aggregation and adhesion and clusters at intercellular junctions. Unable to bind to catenins, weakly associates with the cytoskeleton. This Homo sapiens (Human) protein is Protocadherin-12.